Here is a 363-residue protein sequence, read N- to C-terminus: Copper-containing nitrite reductase (363 aa).

The N-terminal stretch at 1-24 (MSVFRSVLGACVLLGSCASSLALA) is a signal peptide. Plastocyanin-like domains follow at residues 25 to 193 (GGAE…YDRV) and 194 to 363 (YTIG…EPKQ). 7 residues coordinate Cu cation: His113, His118, His153, Cys154, His163, Met168, and His324.

It belongs to the multicopper oxidase family. In terms of assembly, homotrimer. Cu(2+) is required as a cofactor. It depends on Cu(+) as a cofactor. The cofactor is FAD.

The protein localises to the periplasm. The enzyme catalyses nitric oxide + Fe(III)-[cytochrome c] + H2O = Fe(II)-[cytochrome c] + nitrite + 2 H(+). The protein operates within nitrogen metabolism; nitrate reduction (denitrification); dinitrogen from nitrate: step 2/4. This Pseudomonas chlororaphis (Pseudomonas aureofaciens) protein is Copper-containing nitrite reductase (nirK).